An 88-amino-acid polypeptide reads, in one-letter code: Cytochrome c oxidase subunit 6B2 (88 aa).

The disordered stretch occupies residues 1–22 (MLDVEAQEPPKGKWSTPPFDPR). Residues 29–75 (IRNCYQNFLDYHRCLKTRTRRGKSTQPCEYYFRVYHSLCPISWVESW) form the CHCH domain. A Cx9C motif motif is present at residues 32-42 (CYQNFLDYHRC). 2 cysteine pairs are disulfide-bonded: Cys-32–Cys-67 and Cys-42–Cys-56. The short motif at 56 to 67 (CEYYFRVYHSLC) is the Cx10C motif element.

Belongs to the cytochrome c oxidase subunit 6B family. Component of the cytochrome c oxidase (complex IV, CIV), a multisubunit enzyme composed of 14 subunits. The complex is composed of a catalytic core of 3 subunits MT-CO1, MT-CO2 and MT-CO3, encoded in the mitochondrial DNA, and 11 supernumerary subunits COX4I1 (or COX4I2), COX5A, COX5B, COX6A1 (or COX6A2), COX6B1 (or COX6B2), COX6C, COX7A2 (or COX7A1), COX7B, COX7C, COX8A and NDUFA4, which are encoded in the nuclear genome. The complex exists as a monomer or a dimer and forms supercomplexes (SCs) in the inner mitochondrial membrane with NADH-ubiquinone oxidoreductase (complex I, CI) and ubiquinol-cytochrome c oxidoreductase (cytochrome b-c1 complex, complex III, CIII), resulting in different assemblies (supercomplex SCI(1)III(2)IV(1) and megacomplex MCI(2)III(2)IV(2)). Testis specific. Weak expression in thymus and heart. Expressed in cancer cell lines.

Its subcellular location is the mitochondrion inner membrane. Its pathway is energy metabolism; oxidative phosphorylation. Component of the cytochrome c oxidase, the last enzyme in the mitochondrial electron transport chain which drives oxidative phosphorylation. The respiratory chain contains 3 multisubunit complexes succinate dehydrogenase (complex II, CII), ubiquinol-cytochrome c oxidoreductase (cytochrome b-c1 complex, complex III, CIII) and cytochrome c oxidase (complex IV, CIV), that cooperate to transfer electrons derived from NADH and succinate to molecular oxygen, creating an electrochemical gradient over the inner membrane that drives transmembrane transport and the ATP synthase. Cytochrome c oxidase is the component of the respiratory chain that catalyzes the reduction of oxygen to water. Electrons originating from reduced cytochrome c in the intermembrane space (IMS) are transferred via the dinuclear copper A center (CU(A)) of subunit 2 and heme A of subunit 1 to the active site in subunit 1, a binuclear center (BNC) formed by heme A3 and copper B (CU(B)). The BNC reduces molecular oxygen to 2 water molecules using 4 electrons from cytochrome c in the IMS and 4 protons from the mitochondrial matrix. The protein is Cytochrome c oxidase subunit 6B2 (COX6B2) of Homo sapiens (Human).